The chain runs to 130 residues: Small ribosomal subunit protein uS9 (130 aa).

It belongs to the universal ribosomal protein uS9 family.

In Burkholderia mallei (strain NCTC 10247), this protein is Small ribosomal subunit protein uS9.